We begin with the raw amino-acid sequence, 291 residues long: Ribosome maturation factor RimP (291 aa).

The segment at 188-291 (ERGLGEDEEF…GGKPKAKETH (104 aa)) is disordered. The span at 193 to 211 (EDEEFEDDADEVFEGDEAD) shows a compositional bias: acidic residues. 2 stretches are compositionally biased toward basic and acidic residues: residues 212 to 237 (EKAA…EKRA) and 245 to 254 (AKSEKAEKSQ).

Belongs to the RimP family.

It is found in the cytoplasm. Functionally, required for maturation of 30S ribosomal subunits. The polypeptide is Ribosome maturation factor RimP (Azorhizobium caulinodans (strain ATCC 43989 / DSM 5975 / JCM 20966 / LMG 6465 / NBRC 14845 / NCIMB 13405 / ORS 571)).